Consider the following 352-residue polypeptide: C-glycoside deglycosidase alpha subunit (352 aa).

Glu-147 is a binding site for Mn(2+). The active-site Proton acceptor is the His-149. The Mn(2+) site is built by Asp-179, His-269, and Glu-305.

This sequence belongs to the C-glycoside deglycosidase alpha subunit family. In terms of assembly, heterodimer composed of an alpha subunit (CarB2) and a beta subunit (CarC2). A divalent metal cation serves as cofactor.

The catalysed reaction is 3''-dehydroorientin = 1,5-anhydro-D-erythro-hex-1-en-3-ulose + luteolin. Activity is strongly reduced in the presence of chelating agents. Carbon-carbon bond-cleaving enzyme which participates in the metabolism of C-glycosides. Acts on the C8-glycosylated compound 3''-dehydroorientin (3''-oxo-orientin). This chain is C-glycoside deglycosidase alpha subunit, found in Arthrobacter globiformis (strain ATCC 8010 / DSM 20124 / JCM 1332 / NBRC 12137 / NCIMB 8907 / NRRL B-2979 / 168).